A 980-amino-acid chain; its full sequence is Envelope glycoprotein B (980 aa).

The segment covering 1–14 (MSSGCRSVGGSTWG) has biased composition (polar residues). 2 disordered regions span residues 1–20 (MSSGCRSVGGSTWGNWRGDG) and 88–118 (TTPSPPTSTPTSMSTHSHGTVDPTLLPTETP). A signal peptide spans 1–86 (MSSGCRSVGG…LFGSCVVRAV (86 aa)). At 87–849 (PTTPSPPTST…SGIASFLNNP (763 aa)) the chain is on the virion surface side. Low complexity predominate over residues 96–118 (TPTSMSTHSHGTVDPTLLPTETP). Cystine bridges form between Cys-140–Cys-647, Cys-157–Cys-603, Cys-231–Cys-296, Cys-389–Cys-437, and Cys-668–Cys-708. Asn-165 carries N-linked (GlcNAc...) asparagine; by host glycosylation. The interval 197 to 203 (VWKGYSH) is involved in fusion and/or binding to host membrane. An N-linked (GlcNAc...) asparagine; by host glycan is attached at Asn-275. The tract at residues 282-290 (GWMPWRHYT) is involved in fusion and/or binding to host membrane. N-linked (GlcNAc...) asparagine; by host glycosylation is found at Asn-380, Asn-423, Asn-497, Asn-514, Asn-515, and Asn-560. Positions 505–516 (LLNPNANNNNNT) are enriched in low complexity. Positions 505–535 (LLNPNANNNNNTTRRRRSLLSVPEPQPTQDG) are disordered. 2 N-linked (GlcNAc...) asparagine; by host glycosylation sites follow: Asn-727 and Asn-749. Hydrophobic membrane proximal region stretches follow at residues 794 to 847 (IDSV…SFLN) and 823 to 843 (AVGTLVLAAAGAVVSTVSGIA). A helical membrane pass occupies residues 850 to 870 (FGGLAIGLLVIAGLVAAFFAY). The Intravirion portion of the chain corresponds to 871–980 (RYVMQIRSNP…NDTMENEKMV (110 aa)). Positions 925-928 (YMSM) match the Golgi targeting motif. The Internalization motif motif lies at 965–968 (YTRL).

Belongs to the herpesviridae glycoprotein B family. Homotrimer; disulfide-linked. Binds to heparan sulfate proteoglycans. Interacts with gH/gL heterodimer. In terms of processing, a proteolytic cleavage by host furin generates two subunits that remain linked by disulfide bonds.

Its subcellular location is the virion membrane. It is found in the host cell membrane. The protein resides in the host endosome membrane. It localises to the host Golgi apparatus membrane. Functionally, envelope glycoprotein that forms spikes at the surface of virion envelope. Essential for the initial attachment to heparan sulfate moieties of the host cell surface proteoglycans. Involved in fusion of viral and cellular membranes leading to virus entry into the host cell. Following initial binding to its host receptors, membrane fusion is mediated by the fusion machinery composed at least of gB and the heterodimer gH/gL. May be involved in the fusion between the virion envelope and the outer nuclear membrane during virion egress. This Equine herpesvirus 1 (strain AB1) (EHV-1) protein is Envelope glycoprotein B.